The sequence spans 398 residues: Enoyl-[acyl-carrier-protein] reductase [NADH] (398 aa).

NAD(+)-binding positions include 48–53 (GASTGY), 74–75 (FE), 111–112 (DG), and 139–140 (LA). Y225 serves as a coordination point for substrate. Y235 acts as the Proton donor in catalysis. Residues K244 and 273 to 275 (VVT) each bind NAD(+).

Belongs to the TER reductase family. In terms of assembly, monomer.

It carries out the reaction a 2,3-saturated acyl-[ACP] + NAD(+) = a (2E)-enoyl-[ACP] + NADH + H(+). The protein operates within lipid metabolism; fatty acid biosynthesis. Involved in the final reduction of the elongation cycle of fatty acid synthesis (FAS II). Catalyzes the reduction of a carbon-carbon double bond in an enoyl moiety that is covalently linked to an acyl carrier protein (ACP). This is Enoyl-[acyl-carrier-protein] reductase [NADH] from Variovorax paradoxus (strain S110).